A 249-amino-acid polypeptide reads, in one-letter code: CDP-diacylglycerol pyrophosphatase (249 aa).

The chain crosses the membrane as a helical span at residues 5 to 25; it reads GYFLLAVIVIVAAAGVGYWKF.

The protein belongs to the Cdh family.

It localises to the cell inner membrane. It catalyses the reaction a CDP-1,2-diacyl-sn-glycerol + H2O = a 1,2-diacyl-sn-glycero-3-phosphate + CMP + 2 H(+). It participates in phospholipid metabolism; CDP-diacylglycerol degradation; phosphatidate from CDP-diacylglycerol: step 1/1. This Salmonella arizonae (strain ATCC BAA-731 / CDC346-86 / RSK2980) protein is CDP-diacylglycerol pyrophosphatase.